Here is a 49-residue protein sequence, read N- to C-terminus: Putative DNA-directed RNA polymerase subunit omega (49 aa).

This sequence belongs to the RNA polymerase subunit omega family.

The protein resides in the plastid. It localises to the chloroplast. It carries out the reaction RNA(n) + a ribonucleoside 5'-triphosphate = RNA(n+1) + diphosphate. Its function is as follows. May be involved in RNA polymerase activity. The chain is Putative DNA-directed RNA polymerase subunit omega (rpoZ) from Cyanidioschyzon merolae (strain NIES-3377 / 10D) (Unicellular red alga).